The primary structure comprises 652 residues: Gametogenetin (652 aa).

Disordered stretches follow at residues 1-39 (MGNLQSEPSAGGGSRKVQPSDRAPDSRRTSLVEPEMTSQ), 52-237 (PGSA…DSES), 251-273 (PSLAPPAASSSLAAKASLGGGGG), 291-473 (QGPL…GHKE), and 488-576 (LAAD…GAAN). 2 stretches are compositionally biased toward basic and acidic residues: residues 18 to 30 (QPSDRAPDSRRTS) and 124 to 133 (RLLEASHRGQ). Residues 123-486 (RRLLEASHRG…APTAAPALPP (364 aa)) form an interaction with GGNBP1 region. 2 stretches are compositionally biased toward pro residues: residues 138–149 (SLRPLKPPPPPR) and 163–178 (QFPPPLETWKPPPPLP). Over residues 201–212 (ESQAGPRNQGQT) the composition is skewed to polar residues. Composition is skewed to low complexity over residues 213 to 230 (AGRARGGAPPHAGEGEMA), 251 to 267 (PSLAPPAASSSLAAKAS), and 299 to 312 (ARPLGEVSRGAQEA). Serine 389 bears the Phosphoserine mark. The span at 407–422 (APALLAPPTFIFPAPT) shows a compositional bias: low complexity. 2 stretches are compositionally biased toward pro residues: residues 428–466 (RPGPPGLQELPPLPPPTPPPTLQPPALQPTPLPVAPPLT) and 495–513 (APSPAPAPTVAEPSPPVSA). Residues 491 to 652 (DQAPAPSPAP…HYDLQATHSN (162 aa)) form an interactions with ZNF403/GGNBP2 and OAZ3 region. Basic residues predominate over residues 523 to 532 (TRTRRNKGSR). Over residues 538 to 552 (TRKDGLHGDGPRERA) the composition is skewed to basic and acidic residues.

Interacts with FANCL, GGNBP1 and ZNF403/GGNBP2.

May be involved in spermatogenesis. The sequence is that of Gametogenetin (GGN) from Homo sapiens (Human).